Reading from the N-terminus, the 258-residue chain is 14-3-3 protein 6 (258 aa).

The disordered stretch occupies residues 238-258; that stretch reads DMQDDGTDEIKEATPKPDDNE. Residues 245-258 are compositionally biased toward basic and acidic residues; it reads DEIKEATPKPDDNE.

This sequence belongs to the 14-3-3 family. In terms of assembly, homodimer.

The protein is 14-3-3 protein 6 (TFT6) of Solanum lycopersicum (Tomato).